Here is a 106-residue protein sequence, read N- to C-terminus: MNKILKGDEVIVLTGRDKKRRGVVLARVDADHVLVEGVNVVKKHQKANPMANNPGGIVEKTLPIHISNVALFNPATGKADRVGFKEEDGRKVRVFRSNGAAVGAKA.

This sequence belongs to the universal ribosomal protein uL24 family. Part of the 50S ribosomal subunit.

Functionally, one of two assembly initiator proteins, it binds directly to the 5'-end of the 23S rRNA, where it nucleates assembly of the 50S subunit. One of the proteins that surrounds the polypeptide exit tunnel on the outside of the subunit. This Bordetella avium (strain 197N) protein is Large ribosomal subunit protein uL24.